We begin with the raw amino-acid sequence, 1035 residues long: MGDQRPQDRPSSPGMDSTPWYCDKPPSKYFAKRKHRRLRFPPVDTQNWVFVTEGMDDFRYGCQSPEDTLVCRRDEFLLPKISLRGPQADPKSRKKKLLKKAALFSKLSPAQPARKAFVEEVEAQLMTKHPLAMYPNLGEDMPPDLLLQVLKPLDPERKLEDAGSCEGQEKTTDEPTEPGKYPCGEFSPRPPETRVSCLPPEPPKTPVSSLRPEPPETGVSHLRPQPPKTQVSSLHLEPPETGVSHLRPEPPKTQVSSLHLEPPETGVSHLYLEPPGTGVSHLCPEPPKTRVSHLHREPPETGVPDLCLEPPKSRVSHLRPEPSETGVSHLHPEPPKTLVSSLHPEPPETGVSHLCPEPPETRVSPLRQLPPEAGVSHLCPEPPKTRVPPLRPETPKNGVSPLFPEPPKTRISNLRSEPPKIGVSHLCLEPPKTRGSHLRPEPPETGVSHLRPEPPKTRVSSLHLEPPETGVSHLCPEPPEKDVSHLRPEPPDTGVSHLCPEPPKTRVSHLRPEPSETGVSHLRPEPPKILVSSLHQAPPESSVSHLRPEPPETGVSHLRPEPPKTRMYSLRPEPPDTGVSHLCPEPPKTRVSSLPPEPPETGVSHLCPEPPETRVSHLRPEPPETGVSHLRPEPPKTRMYSLRPEPPNTGVSHLCPEPPKTRVSSLPPEPPETGVSHLCPEPPETRVSHLRPEPPETGVSRLHPEPPKTRVSSLHAEPPESRVSHLCPEPPETGVSHLRPEPPKPRVSSLRPEPLETRVSHLRPEPPETGVSHLHPELPKPRVSSLHLEPPKTRRVSSLRLEPPKTGRVSSLCPEPTKTGASHLKELFQEGTSSTMECVSDSLQRRHTSRKLRDFKWAGDLGVNEESISSLFDFTPECRATYQDQKNKKANECSSGLKYSMELDEMDEVKFFSQEKDLDGKIQNAPNSHSAQHVKMGYGAWYLKPKLGKKLRSDEPLIDPKLVLEKPDEPDILDGLYGPIAFKDFILSKGYEMPGIIQRLFARRGWTYDSVKTPIQRAMQVYKYKEDVTDASEED.

Disordered regions lie at residues 1 to 21 (MGDQRPQDRPSSPGMDSTPWY) and 159 to 797 (LEDA…RRVS). A compositionally biased stretch (basic and acidic residues) spans 159-173 (LEDAGSCEGQEKTTD). A compositionally biased stretch (pro residues) spans 380-392 (PEPPKTRVPPLRP). Residues 478 to 490 (PPEKDVSHLRPEP) are compositionally biased toward basic and acidic residues. Polar residues predominate over residues 533 to 544 (SLHQAPPESSVS). Basic and acidic residues-rich tracts occupy residues 611–622 (PETRVSHLRPEP), 683–694 (PETRVSHLRPEP), and 753–766 (EPLETRVSHLRPEP).

It belongs to the FAM47 family.

This is Putative protein FAM47C (FAM47C) from Homo sapiens (Human).